The primary structure comprises 203 residues: ATP-dependent Clp protease proteolytic subunit 2 (203 aa).

Ser98 acts as the Nucleophile in catalysis. His123 is an active-site residue.

This sequence belongs to the peptidase S14 family. Fourteen ClpP subunits assemble into 2 heptameric rings which stack back to back to give a disk-like structure with a central cavity, resembling the structure of eukaryotic proteasomes.

Its subcellular location is the cytoplasm. It carries out the reaction Hydrolysis of proteins to small peptides in the presence of ATP and magnesium. alpha-casein is the usual test substrate. In the absence of ATP, only oligopeptides shorter than five residues are hydrolyzed (such as succinyl-Leu-Tyr-|-NHMec, and Leu-Tyr-Leu-|-Tyr-Trp, in which cleavage of the -Tyr-|-Leu- and -Tyr-|-Trp bonds also occurs).. Its function is as follows. Cleaves peptides in various proteins in a process that requires ATP hydrolysis. Has a chymotrypsin-like activity. Plays a major role in the degradation of misfolded proteins. This is ATP-dependent Clp protease proteolytic subunit 2 from Chlamydia pneumoniae (Chlamydophila pneumoniae).